We begin with the raw amino-acid sequence, 664 residues long: RBBP8 N-terminal-like protein (664 aa).

Basic and acidic residues predominate over residues 125–140 (LRGLGDRPKPRAKEGT). Disordered regions lie at residues 125 to 284 (LRGL…KLSP) and 369 to 664 (RAGS…WEET). The span at 241-255 (GTPPPLPARSSPPSP) shows a compositional bias: pro residues. Residues 437 to 454 (ALDKPLDLSEWGRARGQD) show a composition bias toward basic and acidic residues. The span at 481–496 (SGPLTRSPQALSNGTK) shows a compositional bias: polar residues. The segment covering 516–528 (LPGSQLSLSSPGS) has biased composition (low complexity). Positions 537–552 (PLPPPHPQPPPHPQPP) are enriched in pro residues. Positions 554 to 570 (LDGHPEPSKAEVLRPES) are enriched in basic and acidic residues. A compositionally biased stretch (polar residues) spans 584–597 (GLSSQAEATTSTTG). The span at 628–637 (KKPSRGRRKL) shows a compositional bias: basic residues. Polar residues predominate over residues 654–664 (PSPNSSPWEET).

The sequence is that of RBBP8 N-terminal-like protein (RBBP8NL) from Homo sapiens (Human).